We begin with the raw amino-acid sequence, 453 residues long: Tubulin beta-2 chain (453 aa).

8 residues coordinate GTP: glutamine 11, glutamate 71, serine 140, glycine 144, threonine 145, glycine 146, asparagine 206, and asparagine 228. Glutamate 71 contacts Mg(2+).

Belongs to the tubulin family. Dimer of alpha and beta chains. A typical microtubule is a hollow water-filled tube with an outer diameter of 25 nm and an inner diameter of 15 nM. Alpha-beta heterodimers associate head-to-tail to form protofilaments running lengthwise along the microtubule wall with the beta-tubulin subunit facing the microtubule plus end conferring a structural polarity. Microtubules usually have 13 protofilaments but different protofilament numbers can be found in some organisms and specialized cells. It depends on Mg(2+) as a cofactor.

Its subcellular location is the cytoplasm. It is found in the cytoskeleton. Its function is as follows. Tubulin is the major constituent of microtubules, a cylinder consisting of laterally associated linear protofilaments composed of alpha- and beta-tubulin heterodimers. Microtubules grow by the addition of GTP-tubulin dimers to the microtubule end, where a stabilizing cap forms. Below the cap, tubulin dimers are in GDP-bound state, owing to GTPase activity of alpha-tubulin. In Geotrichum candidum (Oospora lactis), this protein is Tubulin beta-2 chain.